The following is a 343-amino-acid chain: Ornithine carbamoyltransferase (343 aa).

Carbamoyl phosphate is bound by residues 62–65 (STRT), Q89, R113, and 140–143 (HPTQ). Residues N172, D236, and 240 to 241 (SM) each bind L-ornithine. Carbamoyl phosphate is bound by residues 278 to 279 (CL) and R323.

This sequence belongs to the aspartate/ornithine carbamoyltransferase superfamily. OTCase family.

Its subcellular location is the cytoplasm. The enzyme catalyses carbamoyl phosphate + L-ornithine = L-citrulline + phosphate + H(+). Its pathway is amino-acid degradation; L-arginine degradation via ADI pathway; carbamoyl phosphate from L-arginine: step 2/2. Its function is as follows. Reversibly catalyzes the transfer of the carbamoyl group from carbamoyl phosphate (CP) to the N(epsilon) atom of ornithine (ORN) to produce L-citrulline. This is Ornithine carbamoyltransferase from Levilactobacillus brevis (strain ATCC 367 / BCRC 12310 / CIP 105137 / JCM 1170 / LMG 11437 / NCIMB 947 / NCTC 947) (Lactobacillus brevis).